The primary structure comprises 76 residues: Conotoxin Cl6.4 (76 aa).

The signal sequence occupies residues 1-19; sequence MTLTFLLVVALCMLTTCHT. Positions 20 to 47 are excised as a propeptide; sequence ENYRDSQKVSPVRSIGKTQFARSLRLSE. 3 disulfide bridges follow: C50/C66, C57/C70, and C65/C75.

As to expression, expressed by the venom duct.

Its subcellular location is the secreted. The sequence is that of Conotoxin Cl6.4 from Californiconus californicus (California cone).